The chain runs to 208 residues: Uracil phosphoribosyltransferase (208 aa).

5-phospho-alpha-D-ribose 1-diphosphate is bound by residues R77, R102, and 128-136 (DPMLATGGT). Uracil-binding positions include I191 and 196 to 198 (GDI). D197 lines the 5-phospho-alpha-D-ribose 1-diphosphate pocket.

This sequence belongs to the UPRTase family. Mg(2+) is required as a cofactor.

The enzyme catalyses UMP + diphosphate = 5-phospho-alpha-D-ribose 1-diphosphate + uracil. Its pathway is pyrimidine metabolism; UMP biosynthesis via salvage pathway; UMP from uracil: step 1/1. Its activity is regulated as follows. Allosterically activated by GTP. In terms of biological role, catalyzes the conversion of uracil and 5-phospho-alpha-D-ribose 1-diphosphate (PRPP) to UMP and diphosphate. This is Uracil phosphoribosyltransferase from Aquifex aeolicus (strain VF5).